The primary structure comprises 329 residues: MQGSVTEFLKPRLVDIEQVNSTRAKVTLEPLERGFGHTLGNALRRILLSSMPGCAVTEVEIDGVLHEYSSKEGVQEDILEILLNLKGLAVTIEGKDEAMLTLSKSGAGPVIAADITHDGDVTIVNPDHVICHLTGNNDISMRIRVERGRGYVPASARAQTEDDDRPIGRLLVDASFSPVARIAYNVEAARVEQRTDLDKLVIDMTTNGTIDPEEAIRRSATILAEQLDAFVELRDVTEPELKEEKPEFDPILLRPVDDLELTVRSANCLKAEAIHYIGDLVQRTEVELLKTPNLGKKSLTEIKDVLASRGLSLGMRLENWPPASLADDL.

Residues 1–234 form an alpha N-terminal domain (alpha-NTD) region; that stretch reads MQGSVTEFLK…EQLDAFVELR (234 aa). An alpha C-terminal domain (alpha-CTD) region spans residues 248 to 329; sequence FDPILLRPVD…WPPASLADDL (82 aa).

The protein belongs to the RNA polymerase alpha chain family. Homodimer. The RNAP catalytic core consists of 2 alpha, 1 beta, 1 beta' and 1 omega subunit. When a sigma factor is associated with the core the holoenzyme is formed, which can initiate transcription.

The enzyme catalyses RNA(n) + a ribonucleoside 5'-triphosphate = RNA(n+1) + diphosphate. Functionally, DNA-dependent RNA polymerase catalyzes the transcription of DNA into RNA using the four ribonucleoside triphosphates as substrates. In Shewanella putrefaciens (strain CN-32 / ATCC BAA-453), this protein is DNA-directed RNA polymerase subunit alpha.